The chain runs to 150 residues: Endoribonuclease YbeY (150 aa).

Zn(2+)-binding residues include His112, His116, and Asp122.

It belongs to the endoribonuclease YbeY family. Requires Zn(2+) as cofactor.

The protein localises to the cytoplasm. Functionally, single strand-specific metallo-endoribonuclease involved in late-stage 70S ribosome quality control and in maturation of the 3' terminus of the 16S rRNA. This is Endoribonuclease YbeY from Protochlamydia amoebophila (strain UWE25).